The following is a 63-amino-acid chain: Conotoxin LeDr243 (63 aa).

An N-terminal signal peptide occupies residues 1–22; that stretch reads MRCLPVFVILLLLIASTPSIDA. A propeptide spanning residues 23 to 47 is cleaved from the precursor; the sequence is RPKTKDDMPLASFNDNAKRILQILS. Cys-60 is modified (cysteine amide). The propeptide occupies 62–63; sequence LG.

It belongs to the conotoxin T superfamily. Contains 2 disulfide bonds that can be either 'C1-C3, C2-C4' or 'C1-C4, C2-C3', since these disulfide connectivities have been observed for conotoxins with cysteine framework V (for examples, see AC P0DQQ7 and AC P81755). Expressed by the venom duct.

It localises to the secreted. This Conus litteratus (Lettered cone) protein is Conotoxin LeDr243.